Reading from the N-terminus, the 370-residue chain is MVSQRLEELAAEFGLVERALGDPAMLADPREYARLTRRHRELTPIVTLYREHAVLSSDLEGARELLADPDMRELAQGEIESLSARLAQIEAELEVLLLPTDPDDAKNVILELRAGAGGAEAALFAVDLLRMYTRYAEGAGLKLNVLDASESDLGGASKVVAEVTGEFAFRAFKWERGVHRVQRVPATESQGRIHTSTVTVAVLPEAEQGEVSVDPSEVRIDVFRSQGAGGQGVNTTDSAVRAVYRPGTPDEIVVVCQDSRSQIKNREKALVVLASRLAERERAAREERERETRAAQVGTGERSEKIRTYNYPQNRVTDHRLEGDAKNFALDSVMAGGLAPIVAALSRDERERQLLELQGAEGERGTYGAA.

At Gln231 the chain carries N5-methylglutamine. Residues 284 to 293 show a composition bias toward basic and acidic residues; the sequence is AREERERETR. A disordered region spans residues 284–303; that stretch reads AREERERETRAAQVGTGERS.

The protein belongs to the prokaryotic/mitochondrial release factor family. Methylated by PrmC. Methylation increases the termination efficiency of RF1.

The protein localises to the cytoplasm. Functionally, peptide chain release factor 1 directs the termination of translation in response to the peptide chain termination codons UAG and UAA. The chain is Peptide chain release factor 1 from Deinococcus geothermalis (strain DSM 11300 / CIP 105573 / AG-3a).